The sequence spans 333 residues: MSTPDAQAAALHAPVLAQRCVDLLAPALESDGAVLVDATLGMGGHSELVLEQCPHARVLGIDRDPRALELATARLARFGQRFTPVHAVYDEIDDVARQHAGGAVQGVLFDLGVSSLQLDDAGRGFAYAQDAPLDMRMDPTTGPTAADLLADADEAELRRILRTYGEEKFAPRIAAAIVRRREAAPLRRSSDLVEVVRGAIPMSAQRTGGHPAKRTFQALRIAVNRELEVLERALPRAIDALAVGGRIVVESYHSLEDRLVKRELARGATSSAPRHLPVVPEEDQPYLELLTHGAEQADDVELAANPRAASVRLRAARRIRTTPTRPSPRRRRP.

S-adenosyl-L-methionine is bound by residues 43–45, aspartate 62, tyrosine 89, aspartate 110, and glutamine 117; that span reads GGH. The disordered stretch occupies residues 312–333; it reads RLRAARRIRTTPTRPSPRRRRP.

The protein belongs to the methyltransferase superfamily. RsmH family.

The protein resides in the cytoplasm. The enzyme catalyses cytidine(1402) in 16S rRNA + S-adenosyl-L-methionine = N(4)-methylcytidine(1402) in 16S rRNA + S-adenosyl-L-homocysteine + H(+). Specifically methylates the N4 position of cytidine in position 1402 (C1402) of 16S rRNA. The sequence is that of Ribosomal RNA small subunit methyltransferase H from Beutenbergia cavernae (strain ATCC BAA-8 / DSM 12333 / CCUG 43141 / JCM 11478 / NBRC 16432 / NCIMB 13614 / HKI 0122).